Here is a 940-residue protein sequence, read N- to C-terminus: Alanine--tRNA ligase (940 aa).

Residues histidine 581, histidine 585, cysteine 683, and histidine 687 each coordinate Zn(2+).

Belongs to the class-II aminoacyl-tRNA synthetase family. Zn(2+) is required as a cofactor.

It is found in the cytoplasm. The enzyme catalyses tRNA(Ala) + L-alanine + ATP = L-alanyl-tRNA(Ala) + AMP + diphosphate. Catalyzes the attachment of alanine to tRNA(Ala) in a two-step reaction: alanine is first activated by ATP to form Ala-AMP and then transferred to the acceptor end of tRNA(Ala). Also edits incorrectly charged Ser-tRNA(Ala) and Gly-tRNA(Ala) via its editing domain. The sequence is that of Alanine--tRNA ligase from Leptospira borgpetersenii serovar Hardjo-bovis (strain L550).